The chain runs to 311 residues: Histidine decarboxylase proenzyme (311 aa).

Substrate contacts are provided by Asp64 and Ser82. Ser83 carries the pyruvic acid (Ser) modification. Glu198 (proton donor) is an active-site residue.

The proenzyme is a hexamer of identical pi chains; each pi chain monomer is cleaved to form a small (or beta) chain and a large (or alpha) chain by non-hydrolytic self-catalysis. The cofactor is pyruvate.

The catalysed reaction is L-histidine + H(+) = histamine + CO2. In Lactobacillus sp. (strain 30a), this protein is Histidine decarboxylase proenzyme (hdcA).